A 217-amino-acid polypeptide reads, in one-letter code: NADPH-dependent 3-demethoxyubiquinone 3-hydroxylase, mitochondrial (217 aa).

A run of 2 repeats spans residues 49–130 and 131–217. The interval 49 to 217 is 2 X approximate tandem repeats; the sequence is IIERIIRVDH…KTAIWLSTRV (169 aa). Arg-52 serves as a coordination point for NADH. The Fe cation site is built by Glu-61, Glu-91, His-94, Glu-143, Glu-178, and His-181. Arg-216 is an NADH binding site.

This sequence belongs to the COQ7 family. As to quaternary structure, component of a multi-subunit COQ enzyme complex. It depends on Fe cation as a cofactor.

Its subcellular location is the mitochondrion inner membrane. The catalysed reaction is a 5-methoxy-2-methyl-3-(all-trans-polyprenyl)benzoquinone + NADH + O2 = a 3-demethylubiquinone + NAD(+) + H2O. It functions in the pathway cofactor biosynthesis; ubiquinone biosynthesis. Functionally, catalyzes the hydroxylation of the 5-methoxy-2-methyl-3-(all-trans-polyprenyl)benzoquinone at the C6 position and participates in the biosynthesis of ubiquinone. Catalyzes the reaction through a substrate-mediated reduction pathway, whereby NADH shuttles electrons to 5-methoxy-2-methyl-3-(all-trans-decaprenyl)benzoquinone, which then transfers the electrons to the two Fe(3+) centers. The binding of 5-methoxy-2-methyl-3-(all-trans-polyprenyl)benzoquinone (DMQn) mediates reduction of the diiron center by nicotinamide adenine dinucleotide (NADH) and initiates oxygen activation for subsequent DMQ hydroxylation. Also has a structural role in the COQ enzyme complex, stabilizing other COQ polypeptides. The protein is NADPH-dependent 3-demethoxyubiquinone 3-hydroxylase, mitochondrial of Dictyostelium discoideum (Social amoeba).